The following is a 932-amino-acid chain: Protocadherin gamma-A3 (932 aa).

Residues 1–29 (MTNCLSFRNGRGLALLCALLGTLCETGSG) form the signal peptide. Cadherin domains follow at residues 30–133 (QIRY…APNF), 134–242 (PTEE…PPMF), 243–347 (TQPE…APEI), 348–452 (TITS…PPTF), 453–562 (PHLS…APEI), and 570–682 (DGST…EPSA). At 30–692 (QIRYSVSEEL…KPNDSDLTLY (663 aa)) the chain is on the extracellular side. N-linked (GlcNAc...) asparagine glycans are attached at residues asparagine 265, asparagine 419, and asparagine 545. Asparagine 685 carries N-linked (GlcNAc...) asparagine glycosylation. A helical transmembrane segment spans residues 693 to 713 (LVVAVAAVSCVFLALVIVLLA). Over 714–932 (HRLRRWHKSR…KKKSGKKEKK (219 aa)) the chain is Cytoplasmic. Disordered regions lie at residues 806–841 (LLQQ…WPNN) and 902–932 (ATLT…KEKK). A compositionally biased stretch (basic residues) spans 922–932 (NKKKSGKKEKK).

It localises to the cell membrane. In terms of biological role, potential calcium-dependent cell-adhesion protein. May be involved in the establishment and maintenance of specific neuronal connections in the brain. This chain is Protocadherin gamma-A3 (PCDHGA3), found in Pan troglodytes (Chimpanzee).